Reading from the N-terminus, the 451-residue chain is Phosphoglucosamine mutase (451 aa).

The Phosphoserine intermediate role is filled by S101. The Mg(2+) site is built by S101, D243, D245, and D247. S101 carries the phosphoserine modification.

This sequence belongs to the phosphohexose mutase family. Mg(2+) is required as a cofactor. Post-translationally, activated by phosphorylation.

It catalyses the reaction alpha-D-glucosamine 1-phosphate = D-glucosamine 6-phosphate. Its function is as follows. Catalyzes the conversion of glucosamine-6-phosphate to glucosamine-1-phosphate. In Thermodesulfovibrio yellowstonii (strain ATCC 51303 / DSM 11347 / YP87), this protein is Phosphoglucosamine mutase.